The chain runs to 692 residues: Tripartite terminase subunit 1 (692 aa).

The C3H1-type zinc finger occupies C190 to H218. ATP is bound at residue Y634 to R641.

It belongs to the herpesviridae TRM1 protein family. In terms of assembly, associates with TRM2 and TRM3 to form the tripartite terminase complex. Interacts with portal protein.

The protein localises to the host nucleus. Component of the molecular motor that translocates viral genomic DNA in empty capsid during DNA packaging. Forms a tripartite terminase complex together with TRM2 and TRM3 in the host cytoplasm. Once the complex reaches the host nucleus, it interacts with the capsid portal vertex. This portal forms a ring in which genomic DNA is translocated into the capsid. TRM1 carries an endonuclease activity that plays an important role for the cleavage of concatemeric viral DNA into unit length genomes. The protein is Tripartite terminase subunit 1 of Elephas maximus (Indian elephant).